The primary structure comprises 330 residues: ADP-L-glycero-D-manno-heptose-6-epimerase (330 aa).

NADP(+) is bound by residues 11 to 12 (FI), 32 to 33 (DN), Lys39, Lys54, 75 to 79 (EGACS), and Asn92. Tyr139 functions as the Proton acceptor in the catalytic mechanism. Lys143 serves as a coordination point for NADP(+). Asn168 contributes to the substrate binding site. 2 residues coordinate NADP(+): Val169 and Lys177. Lys177 (proton acceptor) is an active-site residue. Substrate contacts are provided by residues Arg179, His186, 200–203 (FGEY), Arg213, and Tyr292.

The protein belongs to the NAD(P)-dependent epimerase/dehydratase family. HldD subfamily. As to quaternary structure, homopentamer. It depends on NADP(+) as a cofactor.

The catalysed reaction is ADP-D-glycero-beta-D-manno-heptose = ADP-L-glycero-beta-D-manno-heptose. It functions in the pathway nucleotide-sugar biosynthesis; ADP-L-glycero-beta-D-manno-heptose biosynthesis; ADP-L-glycero-beta-D-manno-heptose from D-glycero-beta-D-manno-heptose 7-phosphate: step 4/4. Its function is as follows. Catalyzes the interconversion between ADP-D-glycero-beta-D-manno-heptose and ADP-L-glycero-beta-D-manno-heptose via an epimerization at carbon 6 of the heptose. This Burkholderia ambifaria (strain MC40-6) protein is ADP-L-glycero-D-manno-heptose-6-epimerase.